A 332-amino-acid chain; its full sequence is MTSPAVTSADITGLVGIVPTPSKPGSEAPDAVDTVDLDETARMVELIVASGVDVLLTNGTFGEVATLTYEELLAFNDTVIRTVANRIPVFCGASTLNTRDTIARSLALMGLGANGLFVGRPMWLPLDDEQLVSYYAAVCDAVPAAAVVVYDNTGVFKGKISSAAYAALAEIPQIVASKHLGVLSGSDAYASDLAAVKGRFPLLPTADNWLPSLEAFPGEVPAAWSGDVACGPEPVMALRRAIAEGLWDDARAVHEDIAWATEPLFPGGDISKFMPYSIQIDRAEFEAAGYIVPGPSRHPYGTAPAAYLEGGAEVGRRWAGIRQKYVATLAEP.

Residue K178 is the Schiff-base intermediate with substrate of the active site.

It belongs to the DapA family. As to quaternary structure, homotrimer.

The enzyme catalyses (3Z)-4-(2-carboxyphenyl)-2-oxobut-3-enoate + H2O = 2-formylbenzoate + pyruvate. Not inhibited by sodium borohydride or sodium pyruvate. Unaffected by EDTA, EGTA, Mn(2+), Mg(2+) and Ca(2+). Functionally, plays a role in phenanthrene catabolism. Catalyzes the transformation of trans-2'-carboxbenzalpyruvate to 2-formylbenzoate and pyruvate. The chain is Trans-2'-carboxybenzalpyruvate hydratase-aldolase from Nocardioides sp. (strain KP7).